A 717-amino-acid polypeptide reads, in one-letter code: Ribosomal RNA large subunit methyltransferase K/L (717 aa).

A THUMP domain is found at 43–154 (IGYKACLWSR…KGKANITLDL (112 aa)).

This sequence belongs to the methyltransferase superfamily. RlmKL family.

It is found in the cytoplasm. It carries out the reaction guanosine(2445) in 23S rRNA + S-adenosyl-L-methionine = N(2)-methylguanosine(2445) in 23S rRNA + S-adenosyl-L-homocysteine + H(+). The catalysed reaction is guanosine(2069) in 23S rRNA + S-adenosyl-L-methionine = N(2)-methylguanosine(2069) in 23S rRNA + S-adenosyl-L-homocysteine + H(+). Functionally, specifically methylates the guanine in position 2445 (m2G2445) and the guanine in position 2069 (m7G2069) of 23S rRNA. This Aeromonas hydrophila subsp. hydrophila (strain ATCC 7966 / DSM 30187 / BCRC 13018 / CCUG 14551 / JCM 1027 / KCTC 2358 / NCIMB 9240 / NCTC 8049) protein is Ribosomal RNA large subunit methyltransferase K/L.